Consider the following 249-residue polypeptide: MELGYVLTEGKTKIVYAHPTDPDLAILYHKDGITAGDGARRSVIEGKGELAGQTTANVFRLLNRAGIATHFVDAPEPRLTVVRRCRMIPLEVVMRRLPAGSYLRRHPEAAGQRFDPPLVEFFLKDDARHDPQIAPQEIIAQGIATPAEVEQMTDTGRKVFVTLEAAWQQLDVTLVDLKIEFGRTAQGDLLVADVIDNDSWRIWPSGDPAQMLDKQVYRNAQVVDEALLADVRARYALVAELTGRWGAGS.

Belongs to the SAICAR synthetase family.

The catalysed reaction is 5-amino-1-(5-phospho-D-ribosyl)imidazole-4-carboxylate + L-aspartate + ATP = (2S)-2-[5-amino-1-(5-phospho-beta-D-ribosyl)imidazole-4-carboxamido]succinate + ADP + phosphate + 2 H(+). It functions in the pathway purine metabolism; IMP biosynthesis via de novo pathway; 5-amino-1-(5-phospho-D-ribosyl)imidazole-4-carboxamide from 5-amino-1-(5-phospho-D-ribosyl)imidazole-4-carboxylate: step 1/2. This chain is Phosphoribosylaminoimidazole-succinocarboxamide synthase, found in Chloroflexus aurantiacus (strain ATCC 29366 / DSM 635 / J-10-fl).